A 201-amino-acid chain; its full sequence is Small ribosomal subunit protein uS4c (201 aa).

An S4 RNA-binding domain is found at 89-150 (MRLDNILFRL…KQRSKVLIQN (62 aa)).

This sequence belongs to the universal ribosomal protein uS4 family. Part of the 30S ribosomal subunit. Contacts protein S5. The interaction surface between S4 and S5 is involved in control of translational fidelity.

It localises to the plastid. Its subcellular location is the chloroplast. Its function is as follows. One of the primary rRNA binding proteins, it binds directly to 16S rRNA where it nucleates assembly of the body of the 30S subunit. In terms of biological role, with S5 and S12 plays an important role in translational accuracy. The polypeptide is Small ribosomal subunit protein uS4c (rps4) (Dioscorea elephantipes (Elephant's foot yam)).